The following is a 432-amino-acid chain: Adenosylhomocysteinase (432 aa).

Positions 1 to 24 (MSAYSPLSAQLDADTDVDVESTRT) are disordered. The substrate site is built by D137 and E162. Residue 163-165 (TTT) participates in NAD(+) binding. 2 residues coordinate substrate: K192 and D196. Residues N197, 226–231 (GYGYCG), E249, N284, 305–307 (AGH), and N352 each bind NAD(+).

It belongs to the adenosylhomocysteinase family. NAD(+) serves as cofactor.

The protein resides in the cytoplasm. The catalysed reaction is S-adenosyl-L-homocysteine + H2O = L-homocysteine + adenosine. It participates in amino-acid biosynthesis; L-homocysteine biosynthesis; L-homocysteine from S-adenosyl-L-homocysteine: step 1/1. May play a key role in the regulation of the intracellular concentration of adenosylhomocysteine. The protein is Adenosylhomocysteinase of Haloquadratum walsbyi (strain DSM 16854 / JCM 12705 / C23).